The primary structure comprises 211 residues: uncharacterized protein (211 aa).

3 helical membrane-spanning segments follow: residues 22-42, 111-131, and 133-153; these read FINFVRIAICIVMVWIGGLKV, IIGATIVTVGLLTLSGIWFPV, and GMAGGLLTFGMSIVTLSFMIT.

It to E.coli YkgB. The protein to H.influenzae HI_0219.

The protein resides in the cell membrane. This is an uncharacterized protein from Mannheimia haemolytica (Pasteurella haemolytica).